The primary structure comprises 338 residues: Anthranilate phosphoribosyltransferase (338 aa).

Residues G78, 81 to 82 (GD), T86, 88 to 91 (NIST), 106 to 114 (KHGNRSVSS), and S118 each bind 5-phospho-alpha-D-ribose 1-diphosphate. G78 contacts anthranilate. Residue S90 coordinates Mg(2+). N109 is an anthranilate binding site. R164 contacts anthranilate. Mg(2+) contacts are provided by D223 and E224.

Belongs to the anthranilate phosphoribosyltransferase family. Homodimer. The cofactor is Mg(2+).

The enzyme catalyses N-(5-phospho-beta-D-ribosyl)anthranilate + diphosphate = 5-phospho-alpha-D-ribose 1-diphosphate + anthranilate. The protein operates within amino-acid biosynthesis; L-tryptophan biosynthesis; L-tryptophan from chorismate: step 2/5. Catalyzes the transfer of the phosphoribosyl group of 5-phosphorylribose-1-pyrophosphate (PRPP) to anthranilate to yield N-(5'-phosphoribosyl)-anthranilate (PRA). The protein is Anthranilate phosphoribosyltransferase of Bacillus subtilis (strain 168).